A 127-amino-acid polypeptide reads, in one-letter code: Acetylcholine receptor subunit alpha (127 aa).

Topologically, residues alanine 1–cysteine 127 are extracellular. Cysteine 33 and cysteine 47 are oxidised to a cystine. 2 N-linked (GlcNAc...) asparagine glycosylation sites follow: asparagine 46 and asparagine 94. A disulfide bridge links cysteine 97 with cysteine 98.

It belongs to the ligand-gated ion channel (TC 1.A.9) family. Acetylcholine receptor (TC 1.A.9.1) subfamily. Alpha-1/CHRNA1 sub-subfamily. In terms of assembly, one of the alpha chains that assemble within the acetylcholine receptor, a pentamer of two alpha chains, a beta, a delta, and a gamma or epsilon chains.

It localises to the postsynaptic cell membrane. Its subcellular location is the cell membrane. It carries out the reaction K(+)(in) = K(+)(out). The catalysed reaction is Na(+)(in) = Na(+)(out). Upon acetylcholine binding, the AChR responds by an extensive change in conformation that affects all subunits and leads to opening of an ion-conducting channel across the plasma membrane. Does not bind alpha-bungarotoxin. This chain is Acetylcholine receptor subunit alpha (CHRNA1), found in Natrix tessellata (Dice snake).